Here is a 415-residue protein sequence, read N- to C-terminus: Alpha-2Db adrenergic receptor (415 aa).

The Extracellular portion of the chain corresponds to 1–33 (MDLSTITFLLPNSSEDTNGTSAPRLPPHSQCAS). Residues Asn-12 and Asn-18 are each glycosylated (N-linked (GlcNAc...) asparagine). Residues 34–58 (VLIVLVVTVIILVTIVGNVLVVVAV) traverse the membrane as a helical segment. The Cytoplasmic portion of the chain corresponds to 59–70 (FTSRALRAPQNL). The helical transmembrane segment at 71 to 96 (FLVSLAAADILVATLVIPFSLANEVM) threads the bilayer. Residues 97–106 (GYWYLGSTWC) lie on the Extracellular side of the membrane. Cys-106 and Cys-179 are joined by a disulfide. Residues 107–129 (AFYLALDVLFCTSSIVHLCAISL) form a helical membrane-spanning segment. The Cytoplasmic segment spans residues 130–150 (DRYWSVTKAVSYNLKRTPRRI). A helical membrane pass occupies residues 151 to 173 (KIMITVVWVISAVISFPPLLMTK). Residues 174–184 (HDELECLLNNE) lie on the Extracellular side of the membrane. Asn-183 carries N-linked (GlcNAc...) asparagine glycosylation. A helical transmembrane segment spans residues 185–208 (TWYILSSCIVSFFAPGLIMILVYC). At 209–339 (RIYRVAKQRA…QMREKRFTFV (131 aa)) the chain is on the cytoplasmic side. Residues 234 to 299 (QSETCFVRKG…EGAQSCPKPN (66 aa)) are disordered. Positions 276 to 286 (NRHRNSRFAKS) are enriched in basic residues. Residues 340–363 (LAVVMGVFVLCWFPFFFTYSLHAI) traverse the membrane as a helical segment. The Extracellular segment spans residues 364–376 (CRKSCTIPDSLFN). A helical transmembrane segment spans residues 377–397 (LFFWIGYCNSSVNPIIYTIFN). Residues 398–415 (RDFRKAFKKIMCRHSTRT) are Cytoplasmic-facing.

This sequence belongs to the G-protein coupled receptor 1 family. Adrenergic receptor subfamily. ADRA2D sub-subfamily.

The protein localises to the cell membrane. In terms of biological role, alpha-2 adrenergic receptors mediate the catecholamine-induced inhibition of adenylate cyclase through the action of G proteins. The order of potency for this receptor is dexmedetomidine &gt; norepinephrine = epinephrine &gt; oxymetazoline. The chain is Alpha-2Db adrenergic receptor (adra2db) from Danio rerio (Zebrafish).